The chain runs to 744 residues: Tripartite motif-containing protein 2 (744 aa).

Position 10 is a phosphoserine (Ser10). Residues 23 to 64 form an RING-type zinc finger; that stretch reads CSICLERYKNPKVLPCLHTFCERCLQNYIPAHSLTLSCPVCR. The B box-type zinc finger occupies 113–154; it reads GKPLSCPNHDGNVMDFYCQSCETAMCRECTEGEHAEHPTVPL. Residues Cys118, His121, Cys141, and His146 each contribute to the Zn(2+) site. The stretch at 320 to 421 is one Filamin repeat; sequence TTNAVASETV…IRGSPFKLKV (102 aa). Thr371 is modified (phosphothreonine). Residues Ser375, Ser424, and Ser428 each carry the phosphoserine modification. Residues 432–462 form a disordered region; it reads EGVKRRVKSPGSGHVKQKAVKRPASMYSTGK. NHL repeat units lie at residues 473-516, 520-563, 564-605, 609-652, 656-699, and 700-743; these read IFRV…FSND, KSRF…FSSD, GKFK…FQPN, VTRF…FNQE, MLKF…FDGS, and GSFL…YRYL.

The protein belongs to the TRIM/RBCC family. In terms of assembly, forms homooligomers. Interacts with TRIM3; this interaction reduces TRIM2 activity. Interacts with myosin V; myosin V may not be a substrate for ubiquitination. Interacts with NEFL. Interacts with phosphorylated BCL2L11. Interacts with SIRPA. RING-type zinc finger-dependent and UBE2D1-dependent autoubiquitination.

The protein resides in the cytoplasm. It catalyses the reaction S-ubiquitinyl-[E2 ubiquitin-conjugating enzyme]-L-cysteine + [acceptor protein]-L-lysine = [E2 ubiquitin-conjugating enzyme]-L-cysteine + N(6)-ubiquitinyl-[acceptor protein]-L-lysine.. It participates in protein modification; protein ubiquitination. Functionally, UBE2D1-dependent E3 ubiquitin-protein ligase that mediates the ubiquitination of NEFL and of phosphorylated BCL2L11. Plays a neuroprotective function. May play a role in neuronal rapid ischemic tolerance. Plays a role in antiviral immunity and limits New World arenavirus infection independently of its ubiquitin ligase activity. In Bos taurus (Bovine), this protein is Tripartite motif-containing protein 2 (TRIM2).